The sequence spans 185 residues: Elongation factor P (185 aa).

It belongs to the elongation factor P family.

The protein resides in the cytoplasm. It functions in the pathway protein biosynthesis; polypeptide chain elongation. Functionally, involved in peptide bond synthesis. Stimulates efficient translation and peptide-bond synthesis on native or reconstituted 70S ribosomes in vitro. Probably functions indirectly by altering the affinity of the ribosome for aminoacyl-tRNA, thus increasing their reactivity as acceptors for peptidyl transferase. The polypeptide is Elongation factor P (Dictyoglomus turgidum (strain DSM 6724 / Z-1310)).